The primary structure comprises 123 residues: Large ribosomal subunit protein uL24 (123 aa).

The protein belongs to the universal ribosomal protein uL24 family. As to quaternary structure, part of the 50S ribosomal subunit.

Its function is as follows. One of two assembly initiator proteins, it binds directly to the 5'-end of the 23S rRNA, where it nucleates assembly of the 50S subunit. Located at the polypeptide exit tunnel on the outside of the subunit. This chain is Large ribosomal subunit protein uL24, found in Pyrobaculum aerophilum (strain ATCC 51768 / DSM 7523 / JCM 9630 / CIP 104966 / NBRC 100827 / IM2).